A 245-amino-acid chain; its full sequence is Geranylgeranylglyceryl phosphate synthase (245 aa).

Mg(2+) is bound by residues aspartate 24 and serine 54. Residues 172-178, 203-204, and 225-226 each bind sn-glycerol 1-phosphate; these read YLEAGSG, GG, and GT.

It belongs to the GGGP/HepGP synthase family. Group II subfamily. Mg(2+) serves as cofactor.

It is found in the cytoplasm. It carries out the reaction sn-glycerol 1-phosphate + (2E,6E,10E)-geranylgeranyl diphosphate = sn-3-O-(geranylgeranyl)glycerol 1-phosphate + diphosphate. Its pathway is membrane lipid metabolism; glycerophospholipid metabolism. Its function is as follows. Prenyltransferase that catalyzes the transfer of the geranylgeranyl moiety of geranylgeranyl diphosphate (GGPP) to the C3 hydroxyl of sn-glycerol-1-phosphate (G1P). This reaction is the first ether-bond-formation step in the biosynthesis of archaeal membrane lipids. The protein is Geranylgeranylglyceryl phosphate synthase of Staphylothermus marinus (strain ATCC 43588 / DSM 3639 / JCM 9404 / F1).